The sequence spans 421 residues: Testin (421 aa).

The region spanning 92-199 (MILTNPVAAK…GDVKLPRDMN (108 aa)) is the PET domain. Disordered stretches follow at residues 133-164 (EKQP…PSKC) and 193-213 (KLPR…GGDR). The segment covering 155–164 (PAHDQDPSKC) has biased composition (basic and acidic residues). LIM zinc-binding domains lie at 234 to 297 (YSCY…CDSE), 299 to 359 (PRCA…NHAV), and 362 to 421 (QGCH…KMMS).

This sequence belongs to the prickle / espinas / testin family. Interacts via LIM domain 1 with ZYX. Interacts (via LIM domain 3) with ENAH and VASP. Interacts with ALKBH4, talin, actin, alpha-actinin, GRIP1 and PXN. Interacts (via LIM domain 2) with ACTL7A (via N-terminus). Heterodimer with ACTL7A; the heterodimer interacts with ENAH to form a heterotrimer.

It is found in the cytoplasm. It localises to the cell junction. The protein localises to the focal adhesion. In terms of biological role, scaffold protein that may play a role in cell adhesion, cell spreading and in the reorganization of the actin cytoskeleton. Plays a role in the regulation of cell proliferation. May act as a tumor suppressor. The sequence is that of Testin (TES) from Ovis aries (Sheep).